The following is a 380-amino-acid chain: 1-deoxy-D-xylulose 5-phosphate reductoisomerase (380 aa).

Residues Thr-10, Gly-11, Ser-12, Ile-13, Gly-36, Arg-37, Asn-38, and Asn-120 each contribute to the NADPH site. Lys-121 is a binding site for 1-deoxy-D-xylulose 5-phosphate. NADPH is bound at residue Glu-122. Residue Asp-146 coordinates Mn(2+). 1-deoxy-D-xylulose 5-phosphate contacts are provided by Ser-147, Glu-148, Ser-172, and His-195. Glu-148 is a binding site for Mn(2+). Gly-201 is a binding site for NADPH. Positions 208, 213, 214, and 217 each coordinate 1-deoxy-D-xylulose 5-phosphate. Residue Glu-217 coordinates Mn(2+).

This sequence belongs to the DXR family. Requires Mg(2+) as cofactor. Mn(2+) is required as a cofactor.

It catalyses the reaction 2-C-methyl-D-erythritol 4-phosphate + NADP(+) = 1-deoxy-D-xylulose 5-phosphate + NADPH + H(+). The protein operates within isoprenoid biosynthesis; isopentenyl diphosphate biosynthesis via DXP pathway; isopentenyl diphosphate from 1-deoxy-D-xylulose 5-phosphate: step 1/6. Catalyzes the NADPH-dependent rearrangement and reduction of 1-deoxy-D-xylulose-5-phosphate (DXP) to 2-C-methyl-D-erythritol 4-phosphate (MEP). The chain is 1-deoxy-D-xylulose 5-phosphate reductoisomerase from Listeria monocytogenes serotype 4a (strain HCC23).